We begin with the raw amino-acid sequence, 397 residues long: Elongation factor Tu 2 (397 aa).

Residues 10 to 206 (KPHVNIGTIG…AIDTWIPEPV (197 aa)) enclose the tr-type G domain. The interval 19–26 (GHVDHGKT) is G1. 19–26 (GHVDHGKT) provides a ligand contact to GTP. Position 26 (Thr-26) interacts with Mg(2+). The G2 stretch occupies residues 61–65 (GITIS). The tract at residues 82-85 (DCPG) is G3. GTP contacts are provided by residues 82-86 (DCPGH) and 137-140 (NKCD). The G4 stretch occupies residues 137 to 140 (NKCD). The tract at residues 175-177 (SAL) is G5.

Belongs to the TRAFAC class translation factor GTPase superfamily. Classic translation factor GTPase family. EF-Tu/EF-1A subfamily. Monomer.

The protein localises to the cytoplasm. The catalysed reaction is GTP + H2O = GDP + phosphate + H(+). Functionally, GTP hydrolase that promotes the GTP-dependent binding of aminoacyl-tRNA to the A-site of ribosomes during protein biosynthesis. The chain is Elongation factor Tu 2 from Alkaliphilus metalliredigens (strain QYMF).